The primary structure comprises 470 residues: Isocitrate dehydrogenase (NAD(+)), mitochondrial (470 aa).

The transit peptide at 1 to 26 directs the protein to the mitochondrion; sequence MTRVERGRVLARAIERAVAHRASARR. NAD(+)-binding positions include 138–140 and N159; that span reads TVT. Residues 157–163, R193, Y200, K275, and D319 each bind D-threo-isocitrate; that span reads SPNGAMR. D319 is a Mg(2+) binding site. Position 324 (K324) interacts with NAD(+). D343 is a D-threo-isocitrate binding site. 2 residues coordinate Mg(2+): D343 and D347. NAD(+)-binding positions include 380–385 and N399; that span reads HGTVAD.

Belongs to the isocitrate and isopropylmalate dehydrogenases family. In terms of assembly, forms homodimers. Mg(2+) is required as a cofactor. Requires Mn(2+) as cofactor.

It localises to the mitochondrion. The enzyme catalyses D-threo-isocitrate + NAD(+) = 2-oxoglutarate + CO2 + NADH. The homodimer exhibits allosteric regulation by isocitrate. Its function is as follows. Performs an essential role in the oxidative function of the tricarboxylic acid cycle and respiration. Catalyzes the decarboxylation of isocitrate to produce 2-oxoglutarate and generate NADH to provide electrons for energy production. This Ostreococcus tauri protein is Isocitrate dehydrogenase (NAD(+)), mitochondrial.